A 325-amino-acid chain; its full sequence is tRNA-dihydrouridine(16) synthase (325 aa).

FMN contacts are provided by residues 12–14 (PMQ) and Gln73. Residue Cys103 is the Proton donor of the active site. FMN contacts are provided by residues Lys144, 205–207 (NGE), and 229–230 (GR).

Belongs to the Dus family. DusC subfamily. The cofactor is FMN.

It carries out the reaction 5,6-dihydrouridine(16) in tRNA + NADP(+) = uridine(16) in tRNA + NADPH + H(+). The catalysed reaction is 5,6-dihydrouridine(16) in tRNA + NAD(+) = uridine(16) in tRNA + NADH + H(+). Functionally, catalyzes the synthesis of 5,6-dihydrouridine (D), a modified base found in the D-loop of most tRNAs, via the reduction of the C5-C6 double bond in target uridines. Specifically modifies U16 in tRNAs. This is tRNA-dihydrouridine(16) synthase from Haemophilus ducreyi (strain 35000HP / ATCC 700724).